Here is a 485-residue protein sequence, read N- to C-terminus: NADH-quinone oxidoreductase subunit N (485 aa).

14 helical membrane passes run 10–30, 35–55, 75–95, 104–124, 125–145, 159–179, 203–223, 235–255, 271–291, 297–317, 327–347, 374–394, 408–427, and 449–469; these read AMLP…SIAW, FINA…LYFV, FYIG…YPWL, EFYL…SANH, LASL…LIGY, YMLL…LLYA, ILAG…LVPF, PAPV…AVVM, LVLS…AISQ, LLGY…VAVQ, GVYL…VSLM, AVMT…GFIG, WWLT…YYLR, and ALTA…VLGI.

The protein belongs to the complex I subunit 2 family. NDH-1 is composed of 13 different subunits. Subunits NuoA, H, J, K, L, M, N constitute the membrane sector of the complex.

The protein resides in the cell inner membrane. The enzyme catalyses a quinone + NADH + 5 H(+)(in) = a quinol + NAD(+) + 4 H(+)(out). In terms of biological role, NDH-1 shuttles electrons from NADH, via FMN and iron-sulfur (Fe-S) centers, to quinones in the respiratory chain. The immediate electron acceptor for the enzyme in this species is believed to be ubiquinone. Couples the redox reaction to proton translocation (for every two electrons transferred, four hydrogen ions are translocated across the cytoplasmic membrane), and thus conserves the redox energy in a proton gradient. The polypeptide is NADH-quinone oxidoreductase subunit N (Yersinia enterocolitica serotype O:8 / biotype 1B (strain NCTC 13174 / 8081)).